A 294-amino-acid polypeptide reads, in one-letter code: Serine/threonine-protein kinase Aurora-1 (294 aa).

A Protein kinase domain is found at 31–282; the sequence is FDIGKPLGRG…LHKLLEHPWI (252 aa). ATP contacts are provided by residues 37 to 45 and Lys60; that span reads LGRGKFGHV. Asp154 acts as the Proton acceptor in catalysis. The residue at position 176 (Ser176) is a Phosphoserine. Thr185 carries the phosphothreonine modification.

It belongs to the protein kinase superfamily. Ser/Thr protein kinase family. Aurora subfamily. In terms of assembly, interacts with TPX2. In terms of processing, phosphorylation at Thr-185 may regulate activity and degradation of AUR1 in a cell cycle dependent manner. Abundant in roots, flowers and flower buds, low or absent in expanded leaves, stems and siliques.

It localises to the nucleus membrane. Its subcellular location is the cytoplasm. The protein resides in the cytoskeleton. It is found in the spindle. The protein localises to the spindle pole. It localises to the phragmoplast. The catalysed reaction is L-seryl-[protein] + ATP = O-phospho-L-seryl-[protein] + ADP + H(+). The enzyme catalyses L-threonyl-[protein] + ATP = O-phospho-L-threonyl-[protein] + ADP + H(+). Phosphorylates specifically 'Ser-10' of histone H3 in vitro and colocalizes with phosphorylated histone H3 during mitosis. Associates with cytoskeletal structures that are necessary for cytokinesis and with the microtubule spindle. Also colocalizes with gamma-tubulin and function in microtubule organizing centers (MTOCs). In contrast with the mammalian B-type Aurora, AUR1 has no kinase activity toward 'Ser-28' of histone H3. The polypeptide is Serine/threonine-protein kinase Aurora-1 (AUR1) (Arabidopsis thaliana (Mouse-ear cress)).